The chain runs to 270 residues: Protein FAM110D (270 aa).

The segment covering 1-16 (MLLASPSTPSRGRTPS) has biased composition (low complexity). 3 disordered regions span residues 1-83 (MLLA…RPDS), 117-142 (RDVASSSAGSSERPAAPGGWTAPQDA), and 186-244 (PQSW…QVSV). Over residues 68–78 (RPARRGSGRRL) the composition is skewed to basic residues.

This sequence belongs to the FAM110 family.

This chain is Protein FAM110D (FAM110D), found in Bos taurus (Bovine).